A 440-amino-acid chain; its full sequence is uncharacterized protein (440 aa).

Positions 1–19 (MKKLLLAASIVYFASACLA) are cleaved as a signal peptide.

This is an uncharacterized protein from Rickettsia prowazekii (strain Madrid E).